Here is a 766-residue protein sequence, read N- to C-terminus: Phosphoribosylformylglycinamidine synthase subunit PurL (766 aa).

Residue histidine 49 is part of the active site. Positions 52 and 91 each coordinate ATP. Glutamate 93 provides a ligand contact to Mg(2+). Residues 94–97 (SHNH) and arginine 116 contribute to the substrate site. Histidine 95 serves as the catalytic Proton acceptor. Residue aspartate 117 participates in Mg(2+) binding. Glutamine 240 contributes to the substrate binding site. Aspartate 268 is a Mg(2+) binding site. 312–314 (ESQ) contributes to the substrate binding site. Residues aspartate 508 and glycine 545 each contribute to the ATP site. Mg(2+) is bound at residue asparagine 546. Serine 548 serves as a coordination point for substrate.

It belongs to the FGAMS family. Monomer. Part of the FGAM synthase complex composed of 1 PurL, 1 PurQ and 2 PurS subunits.

The protein localises to the cytoplasm. The enzyme catalyses N(2)-formyl-N(1)-(5-phospho-beta-D-ribosyl)glycinamide + L-glutamine + ATP + H2O = 2-formamido-N(1)-(5-O-phospho-beta-D-ribosyl)acetamidine + L-glutamate + ADP + phosphate + H(+). It functions in the pathway purine metabolism; IMP biosynthesis via de novo pathway; 5-amino-1-(5-phospho-D-ribosyl)imidazole from N(2)-formyl-N(1)-(5-phospho-D-ribosyl)glycinamide: step 1/2. Part of the phosphoribosylformylglycinamidine synthase complex involved in the purines biosynthetic pathway. Catalyzes the ATP-dependent conversion of formylglycinamide ribonucleotide (FGAR) and glutamine to yield formylglycinamidine ribonucleotide (FGAM) and glutamate. The FGAM synthase complex is composed of three subunits. PurQ produces an ammonia molecule by converting glutamine to glutamate. PurL transfers the ammonia molecule to FGAR to form FGAM in an ATP-dependent manner. PurS interacts with PurQ and PurL and is thought to assist in the transfer of the ammonia molecule from PurQ to PurL. The protein is Phosphoribosylformylglycinamidine synthase subunit PurL of Synechococcus sp. (strain CC9902).